Consider the following 201-residue polypeptide: Recombination protein RecR (201 aa).

The C4-type zinc-finger motif lies at 60 to 75; the sequence is CSCCGNVDTSDPCTIC. The region spanning 83 to 178 is the Toprim domain; sequence ATLIVVEDVS…RVTRLAHGVP (96 aa).

Belongs to the RecR family.

May play a role in DNA repair. It seems to be involved in an RecBC-independent recombinational process of DNA repair. It may act with RecF and RecO. The sequence is that of Recombination protein RecR from Brucella abortus biovar 1 (strain 9-941).